The chain runs to 968 residues: MPFTLGQRWISDTESELGLGTVVAIDVRMVTLLFPATGENRLYARNDSPITRVMFNPGDTITHHEGWQLKVEEVSEENGLITYIGTRLDTEETGVSMREVLLDSKLTFSKPQDRLFAGQIDRMDRFALRFRARKYQSEQFRLPWSGLRGIRASLIPHQLHIAYEVGQRHAPRVLLADEVGLGKTIEAGMIIHQQLLSGRAERILIVVPESLQHQWLVEMLRRFNLRFSLFDDSRYSEALLDSTNPFETEQMVICSLDFVRRNKQRLEQLADASWDLLVVDEAHHLAWSEEAPSREYQVIEQLAEHIPGVLLLTATPEQLGQQSHFARLRLLDPDRFHDYEEFINEQQKYRPIADAVTLLLGGERLTDDKLNLLGELINEQDIEPLLKAANSQTEDSEAARQELVTMLMDRHGTSRILFRNTRNGVKGFPHRVLHQIKLPLPTQYQTAIKVSGIMGAKKSLEARAKDMLYPEQIYQEFEGENATWWNFDPRVEWLLNYLIANRNEKVLVICAQAATALQLEQVLREREAIRAAVFHEGLSLIERDRAAAYFASEEDGAQVLLCSEIGSEGRNFQFACQLVMFDLPFNPDLLEQRIGRLDRIGQNREIQIMVPYLENTAQAVLVRWYHEGLDAFEHTCPTGRTIYDSGYQELITYLATPSEQEGLDEFIHTCRQQHEGLKLQLEQGRDRLLEMHSNGGEHGQELAEIIADQDNDVNLVSFALNLFDIVGINQEDRSDNLIVLTPSDHMLVPDFPGLPQDGCTVTFDREQALSREDAQFVSWEHPIIRNGLDLILSGDTGSCAVSLLKNKALPVGTLLAELVYVVEAQAPKHLQLTRFLPPTPVRMLMDKNGTNLAAQVEFESFNRQLNAVNRHTSSKLVNAVQQEVHAMLQQAEALVEEQARLLIEAAKHEADDKLSAELARLEALKAVNPNIRDDEIETLEHNRKMVLENLNQAGWRLDAIRLVVVTHQ.

The 171-residue stretch at 164-334 (EVGQRHAPRV…FARLRLLDPD (171 aa)) folds into the Helicase ATP-binding domain. An ATP-binding site is contributed by 177-184 (DEVGLGKT). The DEAH box signature appears at 280–283 (DEAH). The region spanning 490 to 664 (RVEWLLNYLI…ATPSEQEGLD (175 aa)) is the Helicase C-terminal domain.

This sequence belongs to the SNF2/RAD54 helicase family. RapA subfamily. In terms of assembly, interacts with the RNAP. Has a higher affinity for the core RNAP than for the holoenzyme. Its ATPase activity is stimulated by binding to RNAP.

Its function is as follows. Transcription regulator that activates transcription by stimulating RNA polymerase (RNAP) recycling in case of stress conditions such as supercoiled DNA or high salt concentrations. Probably acts by releasing the RNAP, when it is trapped or immobilized on tightly supercoiled DNA. Does not activate transcription on linear DNA. Probably not involved in DNA repair. This is RNA polymerase-associated protein RapA from Yersinia enterocolitica serotype O:8 / biotype 1B (strain NCTC 13174 / 8081).